We begin with the raw amino-acid sequence, 234 residues long: Phosphoribosylaminoimidazole-succinocarboxamide synthase (234 aa).

This sequence belongs to the SAICAR synthetase family.

The enzyme catalyses 5-amino-1-(5-phospho-D-ribosyl)imidazole-4-carboxylate + L-aspartate + ATP = (2S)-2-[5-amino-1-(5-phospho-beta-D-ribosyl)imidazole-4-carboxamido]succinate + ADP + phosphate + 2 H(+). It functions in the pathway purine metabolism; IMP biosynthesis via de novo pathway; 5-amino-1-(5-phospho-D-ribosyl)imidazole-4-carboxamide from 5-amino-1-(5-phospho-D-ribosyl)imidazole-4-carboxylate: step 1/2. In Streptococcus uberis (strain ATCC BAA-854 / 0140J), this protein is Phosphoribosylaminoimidazole-succinocarboxamide synthase.